The following is a 480-amino-acid chain: tRNA-2-methylthio-N(6)-dimethylallyladenosine synthase (480 aa).

Residues 2 to 118 (NRVHIKTYGC…VPGYLDNLRA (117 aa)) enclose the MTTase N-terminal domain. Cys11, Cys47, and Cys81 together coordinate [4Fe-4S] cluster. Residues 145–169 (DHLLPQDSDSDSQPSTLNSQLRGAA) form a disordered region. A compositionally biased stretch (low complexity) spans 149–159 (PQDSDSDSQPS). Residues 171–405 (PPPQITAFVS…LELLRQNSER (235 aa)) enclose the Radical SAM core domain. [4Fe-4S] cluster-binding residues include Cys185, Cys189, and Cys192. The 63-residue stretch at 408–470 (ALLLDTVEEV…VSTLYGELML (63 aa)) folds into the TRAM domain.

The protein belongs to the methylthiotransferase family. MiaB subfamily. As to quaternary structure, monomer. The cofactor is [4Fe-4S] cluster.

The protein localises to the cytoplasm. It catalyses the reaction N(6)-dimethylallyladenosine(37) in tRNA + (sulfur carrier)-SH + AH2 + 2 S-adenosyl-L-methionine = 2-methylsulfanyl-N(6)-dimethylallyladenosine(37) in tRNA + (sulfur carrier)-H + 5'-deoxyadenosine + L-methionine + A + S-adenosyl-L-homocysteine + 2 H(+). In terms of biological role, catalyzes the methylthiolation of N6-(dimethylallyl)adenosine (i(6)A), leading to the formation of 2-methylthio-N6-(dimethylallyl)adenosine (ms(2)i(6)A) at position 37 in tRNAs that read codons beginning with uridine. In Opitutus terrae (strain DSM 11246 / JCM 15787 / PB90-1), this protein is tRNA-2-methylthio-N(6)-dimethylallyladenosine synthase.